The sequence spans 191 residues: Potassium-transporting ATPase KdpC subunit (191 aa).

The chain crosses the membrane as a helical span at residues 10–30 (ITLVFCVFFSVFYILVLWLFA).

It belongs to the KdpC family. As to quaternary structure, the system is composed of three essential subunits: KdpA, KdpB and KdpC.

The protein localises to the cell inner membrane. Functionally, part of the high-affinity ATP-driven potassium transport (or Kdp) system, which catalyzes the hydrolysis of ATP coupled with the electrogenic transport of potassium into the cytoplasm. This subunit acts as a catalytic chaperone that increases the ATP-binding affinity of the ATP-hydrolyzing subunit KdpB by the formation of a transient KdpB/KdpC/ATP ternary complex. This Bacteroides fragilis (strain ATCC 25285 / DSM 2151 / CCUG 4856 / JCM 11019 / LMG 10263 / NCTC 9343 / Onslow / VPI 2553 / EN-2) protein is Potassium-transporting ATPase KdpC subunit.